The following is an 859-amino-acid chain: Ribose import ATP-binding protein RbsA 1 (859 aa).

The disordered stretch occupies residues 1-351 (MRASLENGDD…AARAPDEASE (351 aa)). The unknown stretch occupies residues 1–353 (MRASLENGDD…RAPDEASEEA (353 aa)). The segment covering 8 to 17 (GDDHDAHRLV) has biased composition (basic and acidic residues). Positions 28-43 (RAARRRAFARARRGER) are enriched in basic residues. Basic and acidic residues-rich tracts occupy residues 44 to 80 (RARG…DRRA), 89 to 129 (RREQ…EEGG), and 137 to 167 (RERE…EGDR). Residues 168–179 (RRRRSRDPRRHP) are compositionally biased toward basic residues. Composition is skewed to basic and acidic residues over residues 193–214 (GARE…GARE), 239–250 (RLDGRAVRDRGV), 263–281 (AGGD…RDVR), 288–301 (DSPR…EEVG), and 308–323 (DSGR…REDV). ABC transporter domains lie at 358–594 (LALT…VGRR) and 607–851 (RDAA…TSDV). An ATP-binding site is contributed by 390–397 (GENGAGKS).

The protein belongs to the ABC transporter superfamily. Ribose importer (TC 3.A.1.2.1) family. In terms of assembly, the complex is composed of an ATP-binding protein (RbsA), two transmembrane proteins (RbsC) and a solute-binding protein (RbsB).

It is found in the cell inner membrane. The catalysed reaction is D-ribose(out) + ATP + H2O = D-ribose(in) + ADP + phosphate + H(+). In terms of biological role, part of the ABC transporter complex RbsABC involved in ribose import. Responsible for energy coupling to the transport system. The chain is Ribose import ATP-binding protein RbsA 1 from Burkholderia pseudomallei (strain 1710b).